Consider the following 186-residue polypeptide: Meiotically up-regulated gene 163 protein (186 aa).

The protein localises to the mitochondrion. Its function is as follows. Has a role in meiosis. The chain is Meiotically up-regulated gene 163 protein (mug163) from Schizosaccharomyces pombe (strain 972 / ATCC 24843) (Fission yeast).